A 391-amino-acid polypeptide reads, in one-letter code: 3-ketoacyl-CoA thiolase (391 aa).

The Acyl-thioester intermediate role is filled by Cys-95. Active-site proton acceptor residues include His-347 and Cys-377.

The protein belongs to the thiolase-like superfamily. Thiolase family. As to quaternary structure, heterotetramer of two alpha chains (FadB) and two beta chains (FadA).

It localises to the cytoplasm. It catalyses the reaction an acyl-CoA + acetyl-CoA = a 3-oxoacyl-CoA + CoA. It functions in the pathway lipid metabolism; fatty acid beta-oxidation. Functionally, catalyzes the final step of fatty acid oxidation in which acetyl-CoA is released and the CoA ester of a fatty acid two carbons shorter is formed. This is 3-ketoacyl-CoA thiolase from Saccharophagus degradans (strain 2-40 / ATCC 43961 / DSM 17024).